The following is a 230-amino-acid chain: uncharacterized protein (230 aa).

The tract at residues 118-195 (LLDEILPKEP…SKREMERLER (78 aa)) is disordered. Over residues 136-146 (QKKKEKRAALK) the composition is skewed to basic residues. 2 stretches are compositionally biased toward basic and acidic residues: residues 160 to 170 (ETDLYGDRDSF) and 179 to 195 (QRSE…RLER).

This is an uncharacterized protein from Schizosaccharomyces pombe (strain 972 / ATCC 24843) (Fission yeast).